Here is a 325-residue protein sequence, read N- to C-terminus: Tetraacyldisaccharide 4'-kinase (325 aa).

55 to 62 (TAGGNGKT) is a binding site for ATP.

Belongs to the LpxK family.

The enzyme catalyses a lipid A disaccharide + ATP = a lipid IVA + ADP + H(+). Its pathway is glycolipid biosynthesis; lipid IV(A) biosynthesis; lipid IV(A) from (3R)-3-hydroxytetradecanoyl-[acyl-carrier-protein] and UDP-N-acetyl-alpha-D-glucosamine: step 6/6. Transfers the gamma-phosphate of ATP to the 4'-position of a tetraacyldisaccharide 1-phosphate intermediate (termed DS-1-P) to form tetraacyldisaccharide 1,4'-bis-phosphate (lipid IVA). The chain is Tetraacyldisaccharide 4'-kinase from Salmonella typhi.